We begin with the raw amino-acid sequence, 425 residues long: G protein-activated inward rectifier potassium channel 2 (425 aa).

The Cytoplasmic segment spans residues 1-91; sequence MTMAKLTESM…ILTTLVDLKW (91 aa). Residues Ser-18 and Ser-25 each carry the phosphoserine modification. Residues 92 to 116 traverse the membrane as a helical segment; sequence RFNLLIFVMVYTVTWLFFGMIWWLI. Residues 117–140 lie on the Extracellular side of the membrane; that stretch reads AYIRGDMDHVEDPSWTPCVTNLNG. The helical; Pore-forming intramembrane region spans 141–152; sequence FVSAFLFSIETE. The segment at residues 153–159 is an intramembrane region (pore-forming); the sequence is TTIGYGY. The short motif at 154–159 is the Selectivity filter element; sequence TIGYGY. The Extracellular portion of the chain corresponds to 160–168; sequence RVITDKCPE. A helical transmembrane segment spans residues 169–190; that stretch reads GIILLLIQSVLGSIVNAFMVGC. Topologically, residues 191–425 are cytoplasmic; sequence MFVKISQPKK…VANLENESKV (235 aa). Residues 392–425 are disordered; it reads NQHAELETEEEEKNPEEQTERNGDVANLENESKV. The PDZ-binding signature appears at 422–425; sequence ESKV.

Belongs to the inward rectifier-type potassium channel (TC 1.A.2.1) family. KCNJ6 subfamily. In terms of assembly, associates with KCNJ3/GIRK1 or KCNJ5/GRIK4 to form a G-protein-activated heteromultimer pore-forming unit. The resulting inward current is much larger. Interacts (via PDZ-binding motif) with SNX27 (via PDZ domain); the interaction is required when endocytosed to prevent degradation in lysosomes and promote recycling to the plasma membrane. As to expression, expressed in insulin-secreting cells and brain.

Its subcellular location is the membrane. The catalysed reaction is K(+)(in) = K(+)(out). Activated by phosphatidylinositol 4,5 biphosphate (PtdIns(4,5)P2). Its function is as follows. Inward rectifier potassium channels are characterized by a greater tendency to allow potassium to flow into the cell rather than out of it. Their voltage dependence is regulated by the concentration of extracellular potassium; as external potassium is raised, the voltage range of the channel opening shifts to more positive voltages. The inward rectification is mainly due to the blockage of outward current by internal magnesium. This potassium channel may be involved in the regulation of insulin secretion by glucose and/or neurotransmitters acting through G-protein-coupled receptors. The protein is G protein-activated inward rectifier potassium channel 2 (KCNJ6) of Mesocricetus auratus (Golden hamster).